Reading from the N-terminus, the 508-residue chain is ADP-ribosylarginine hydrolase CG3568 (508 aa).

The ADP-D-ribose site is built by arginine 209, glycine 349, glycine 351, glycine 353, valine 354, tryptophan 355, tryptophan 390, aspartate 441, asparagine 448, glutamate 449, glycine 459, and aspartate 460.

It carries out the reaction N(omega)-(ADP-D-ribosyl)-L-arginyl-[protein] + H2O = ADP-D-ribose + L-arginyl-[protein]. It catalyses the reaction N(omega)-(ADP-D-ribosyl)-L-arginine + H2O = ADP-D-ribose + L-arginine. In terms of biological role, protein ADP-ribosyl hydrolase that specifically removes mono-ADP-ribosyl modifications from protein arginine residues. The polypeptide is ADP-ribosylarginine hydrolase CG3568 (Drosophila melanogaster (Fruit fly)).